The primary structure comprises 182 residues: Large ribosomal subunit protein uL16 (182 aa).

It belongs to the universal ribosomal protein uL16 family.

In Thermococcus gammatolerans (strain DSM 15229 / JCM 11827 / EJ3), this protein is Large ribosomal subunit protein uL16.